A 303-amino-acid chain; its full sequence is MITRDFFLFLSKSGFLNKMARNWGSRVAAGKIIGGNDFNSSIPTIRQLNSQGLSVTVDHLGEFVNSAEVARERTEECIQTIATIADQELNSHVSLKMTSLGLDIDMDLVYENMTKILQTAEKHKIMVTIDMEDEVRCQKTLDIFKDFRKKYEHVSTVLQAYLYRTEKDIDDLDSLNPFLRLVKGAYKESEKVAFPEKSDVDENYKKIIRKQLLNGHYTAIATHDDKMIDFTKQLAKEHGIANDKFEFQMLYGMRSQTQLSLVKEGYNMRVYLPYGEDWYGYFMRRLAERPSNIAFAFKGMTKK.

Lys96 lines the substrate pocket. Residue Asp130 is part of the active site. FAD contacts are provided by Met131 and Gln159. The active site involves Arg180. FAD-binding positions include 183–185 (KGA) and 222–223 (TH). Position 284-285 (284-285 (RR)) interacts with substrate.

This sequence belongs to the proline dehydrogenase family. FAD is required as a cofactor.

It catalyses the reaction L-proline + a quinone = (S)-1-pyrroline-5-carboxylate + a quinol + H(+). Its pathway is amino-acid degradation; L-proline degradation into L-glutamate; L-glutamate from L-proline: step 1/2. In terms of biological role, converts proline to delta-1-pyrroline-5-carboxylate. Important for the use of proline as a sole carbon and energy source or a sole nitrogen source. In Bacillus subtilis (strain 168), this protein is Proline dehydrogenase 2.